Reading from the N-terminus, the 96-residue chain is Antitoxin ParD4 (96 aa).

The protein belongs to the ParD antitoxin family.

In terms of biological role, antitoxin component of a type II toxin-antitoxin (TA) system. Neutralizes the effect of cognate toxin ParE4, but no other RelE or ParE toxin. This is Antitoxin ParD4 (parD4) from Caulobacter vibrioides (strain ATCC 19089 / CIP 103742 / CB 15) (Caulobacter crescentus).